A 195-amino-acid chain; its full sequence is Myelin-associated neurite-outgrowth inhibitor (195 aa).

Over 1–18 (MNPVYSPASSGVPYANPK) the chain is Cytoplasmic. Residues 19 to 43 (GIGYPAGFPVGYAAAAPAYSPSMYP) form a helical membrane-spanning segment. Topologically, residues 44 to 143 (GANPAFPSGY…APPIPPPRPN (100 aa)) are extracellular. The chain crosses the membrane as a helical span at residues 144-163 (GVTMGMVGGTTMAMSAGTLL). Over 164–195 (TTHSPTPVAPHPSMPTYRQPATPTYSYVPPQW) the chain is Cytoplasmic.

It belongs to the FAM168 family.

The protein resides in the cytoplasm. It localises to the perinuclear region. Its subcellular location is the cell membrane. The protein localises to the cell projection. It is found in the axon. Its function is as follows. Inhibitor of neuronal axonal outgrowth. The polypeptide is Myelin-associated neurite-outgrowth inhibitor (fam168b) (Danio rerio (Zebrafish)).